The primary structure comprises 585 residues: Epithelial sodium channel subunit gamma (585 aa).

The Cytoplasmic segment spans residues 1–55; it reads MAPGEKIKAKIKKNLPVTGPQAPTIKELMRWYCLNTNTHGCRRIVVSRGRLRRLL. A helical transmembrane segment spans residues 56-76; that stretch reads WIGFTLTAVALILWQCALLVF. Residues 77 to 477 are Extracellular-facing; the sequence is SFYTVSVSIK…GGQLGLWMSC (401 aa). Disulfide bonds link C100–C219, C308–C393, C330–C389, C334–C385, C343–C370, and C345–C359. The N-linked (GlcNAc...) asparagine glycan is linked to N207. N-linked (GlcNAc...) asparagine glycosylation occurs at N433. Residues 478–498 traverse the membrane as a helical segment; that stretch reads SVVCVIEIIEVFFIDFFSIIA. Residues 499 to 585 lie on the Cytoplasmic side of the membrane; sequence RRQWQKAKEW…LTDTQMLDEL (87 aa). Residues 513 to 534 are disordered; the sequence is QAPPCPEAPRSPQGQDNPALDI. The PY motif; recruits WW domain-containing proteins and is thereby required for ubiquitination and inhibition of the channel by NEDD4 and NEDD4L signature appears at 559 to 563; sequence PPPKY.

This sequence belongs to the amiloride-sensitive sodium channel (TC 1.A.6) family. SCNN1G subfamily. As to quaternary structure, component of the heterotrimeric epithelial sodium channel (ENaC) composed of an alpha/SCNN1A, a beta/SCNN1B and a gamma/SCNN1G subunit. An additional delta/SCNN1D subunit can replace the alpha/SCNN1A subunit to form an alternative channel with specific properties. Interacts with WWP1 (via WW domains). Interacts with WWP2 (via WW domains); inhibits the channel. Interacts with the full-length immature form of PCSK9 (pro-PCSK9); inhibits ENaC by promoting its proteasomal degradation. Interacts with BPIFA1; the interaction is indirect via SCNN1B and inhibits the proteolytic maturation of SCNN1A and SCNN1G and the activation of ENaC. Phosphorylated on serine and threonine residues. Aldosterone and insulin increase the basal level of phosphorylation. Post-translationally, ubiquitinated. Can be ubiquitinated at multiple sites and undergo monoubiquitination and polyubiquitination. Ubiquitination by NEDD4 or NEDD4L inhibits the ENaC channel through endocytosis, intracellular retention and degradation of its individual subunits. In terms of processing, ENaC is activated through the proteolytic maturation of its subunits. Furin cleaves the SCNN1G subunit first, followed by cleavage by prostasin (PRSS8), which results in a stepwise increase in the open probability of the channel due to the release of an inhibitory tract. BPIFA1, which is recruited by the SCNN1B subunit, prevents the proteolytic activation of ENaC. N-glycosylated. N-linked glycans are processed to complex type during ENaC complex assembly and transport to the plasma membrane.

Its subcellular location is the apical cell membrane. The catalysed reaction is Na(+)(in) = Na(+)(out). With respect to regulation, originally identified and characterized by its inhibition by the diuretic drug amiloride. Functionally, this is one of the three pore-forming subunits of the heterotrimeric epithelial sodium channel (ENaC), a critical regulator of sodium balance and fluid homeostasis. ENaC operates in epithelial tissues, where it mediates the electrodiffusion of sodium ions from extracellular fluid through the apical membrane of cells, with water following osmotically. It plays a key role in maintaining sodium homeostasis through electrogenic sodium reabsorption in the kidneys. Additionally, ENaC is essential for airway surface liquid homeostasis, which is crucial for proper mucus clearance. This Pan troglodytes (Chimpanzee) protein is Epithelial sodium channel subunit gamma.